We begin with the raw amino-acid sequence, 212 residues long: Ribosomal RNA small subunit methyltransferase G (212 aa).

S-adenosyl-L-methionine contacts are provided by residues Gly-72, Leu-77, 123-124, and Arg-138; that span reads VE.

Belongs to the methyltransferase superfamily. RNA methyltransferase RsmG family.

It localises to the cytoplasm. It carries out the reaction guanosine(527) in 16S rRNA + S-adenosyl-L-methionine = N(7)-methylguanosine(527) in 16S rRNA + S-adenosyl-L-homocysteine. Its function is as follows. Specifically methylates the N7 position of guanine in position 527 of 16S rRNA. In Histophilus somni (strain 129Pt) (Haemophilus somnus), this protein is Ribosomal RNA small subunit methyltransferase G.